We begin with the raw amino-acid sequence, 88 residues long: UPF0297 protein GTNG_2488 (88 aa).

Belongs to the UPF0297 family.

The polypeptide is UPF0297 protein GTNG_2488 (Geobacillus thermodenitrificans (strain NG80-2)).